The following is a 126-amino-acid chain: Large ribosomal subunit protein bL12 (126 aa).

This sequence belongs to the bacterial ribosomal protein bL12 family. Homodimer. Part of the ribosomal stalk of the 50S ribosomal subunit. Forms a multimeric L10(L12)X complex, where L10 forms an elongated spine to which 2 to 4 L12 dimers bind in a sequential fashion. Binds GTP-bound translation factors.

In terms of biological role, forms part of the ribosomal stalk which helps the ribosome interact with GTP-bound translation factors. Is thus essential for accurate translation. In Saccharophagus degradans (strain 2-40 / ATCC 43961 / DSM 17024), this protein is Large ribosomal subunit protein bL12.